A 206-amino-acid polypeptide reads, in one-letter code: Adenine phosphoribosyltransferase (206 aa).

The protein belongs to the purine/pyrimidine phosphoribosyltransferase family. In terms of assembly, homodimer.

The protein localises to the cytoplasm. The catalysed reaction is AMP + diphosphate = 5-phospho-alpha-D-ribose 1-diphosphate + adenine. Its pathway is purine metabolism; AMP biosynthesis via salvage pathway; AMP from adenine: step 1/1. Functionally, catalyzes a salvage reaction resulting in the formation of AMP, that is energically less costly than de novo synthesis. The polypeptide is Adenine phosphoribosyltransferase (Burkholderia mallei (strain NCTC 10229)).